Here is a 201-residue protein sequence, read N- to C-terminus: MSRYTGPSWRVSRRLGVSLSGTVKELARRAYAPGDHGRDRRGKLSEYGTQLREKQKLRFMYGMTERQFSNLFVRAGKIKEGTHGANFMALLERRLDNMVYRLGLATTRRQARQLVNHGHITVDGKRVDIPSYEVKVGQIIAVRDKSKNLDIIKNAVEAVVSRPSYVDFDADKLEGKLNRIPAREDMNADIDEALIVEFYNK.

Positions 93–156 (RRLDNMVYRL…KNLDIIKNAV (64 aa)) constitute an S4 RNA-binding domain.

This sequence belongs to the universal ribosomal protein uS4 family. In terms of assembly, part of the 30S ribosomal subunit. Contacts protein S5. The interaction surface between S4 and S5 is involved in control of translational fidelity.

One of the primary rRNA binding proteins, it binds directly to 16S rRNA where it nucleates assembly of the body of the 30S subunit. In terms of biological role, with S5 and S12 plays an important role in translational accuracy. This Limosilactobacillus reuteri subsp. reuteri (strain JCM 1112) (Lactobacillus reuteri) protein is Small ribosomal subunit protein uS4.